A 256-amino-acid chain; its full sequence is L-tyrosine degradation gene cluster protein hmgX (256 aa).

This sequence belongs to the TTC36 family.

The protein resides in the cytoplasm. In terms of biological role, part of the L-tyrosine degradation gene cluster that mediates the biosynthesis of the brownish pigment pyomelanin as an alternative melanin. The 4-hydroxyphenylpyruvate dioxygenase hppD catalyzes the conversion of 4-hydroxyphenylpyruvate to homogentisic acid (HGA). The protein hmgX is crucial for this conversion and thus, probably functions as an accessory factor to mediate specific activity of hppD. The homogentisate 1,2-dioxygenase hmgA is then involved in the cleavage of the aromatic ring of HGA and its conversion to 4-maleylacetoacetate. When hmgA activity is lowered by the cell wall integrity (CWI) signaling pathway, HGA accumulates and leads to the production of pyomelanin through benzoquinone acetic acid after oxidation and polymerization. On the opposite, in non-stress conditions, both hppD and hmgA activities are balanced and HGA is degraded into 4-maleylacetoacetate. 4-maleylacetoacetate is further converted to 4-fumarylacetoacetate by the maleylacetoacetate isomerase maiA, which is degraded into fumarate and acetoacetate by the fumarylacetoacetase fahA. The sequence is that of L-tyrosine degradation gene cluster protein hmgX from Aspergillus fumigatus (strain ATCC MYA-4609 / CBS 101355 / FGSC A1100 / Af293) (Neosartorya fumigata).